We begin with the raw amino-acid sequence, 143 residues long: Cofilin/actin-depolymerizing factor homolog 2 (143 aa).

The 138-residue stretch at 4–141 folds into the ADF-H domain; sequence GVKVSDECVY…FEDELRTIIL (138 aa).

Belongs to the actin-binding proteins ADF family. In terms of assembly, interacts with monomeric actin, does not bind to actin polymers.

It is found in the cytoplasm. Its subcellular location is the cytoskeleton. Functionally, not involved in actin polymerisation, instead functions to stimulate nucleotide exchange on monomeric actin and influence turnover of the small amount of cytosolic actin microfilaments. Essential for erythrocytic schizogony. This chain is Cofilin/actin-depolymerizing factor homolog 2, found in Plasmodium falciparum (isolate 3D7).